We begin with the raw amino-acid sequence, 229 residues long: Cytochrome c oxidase subunit 2 (229 aa).

The Mitochondrial intermembrane segment spans residues 1–14; the sequence is MANHLQFNFQDATS. The chain crosses the membrane as a helical span at residues 15 to 45; sequence PLMQELVKFHDHSLTILFFISALILYVLMMT. Residues 46–59 are Mitochondrial matrix-facing; it reads SLSKLTNKNILDSQ. Residues 60–87 form a helical membrane-spanning segment; it reads EIEMVWTVIPAFILIMLALPSIQILYLM. Residues 88–229 lie on the Mitochondrial intermembrane side of the membrane; sequence DEIASPDITI…FESWIIKLSL (142 aa). The Cu cation site is built by histidine 162, cysteine 197, glutamate 199, cysteine 201, histidine 205, and methionine 208. Position 199 (glutamate 199) interacts with Mg(2+).

It belongs to the cytochrome c oxidase subunit 2 family. In terms of assembly, component of the cytochrome c oxidase (complex IV, CIV), a multisubunit enzyme composed of 14 subunits. The complex is composed of a catalytic core of 3 subunits MT-CO1, MT-CO2 and MT-CO3, encoded in the mitochondrial DNA, and 11 supernumerary subunits COX4I, COX5A, COX5B, COX6A, COX6B, COX6C, COX7A, COX7B, COX7C, COX8 and NDUFA4, which are encoded in the nuclear genome. The complex exists as a monomer or a dimer and forms supercomplexes (SCs) in the inner mitochondrial membrane with NADH-ubiquinone oxidoreductase (complex I, CI) and ubiquinol-cytochrome c oxidoreductase (cytochrome b-c1 complex, complex III, CIII), resulting in different assemblies (supercomplex SCI(1)III(2)IV(1) and megacomplex MCI(2)III(2)IV(2)). Found in a complex with TMEM177, COA6, COX18, COX20, SCO1 and SCO2. Interacts with TMEM177 in a COX20-dependent manner. Interacts with COX20. Interacts with COX16. The cofactor is Cu cation.

The protein resides in the mitochondrion inner membrane. It catalyses the reaction 4 Fe(II)-[cytochrome c] + O2 + 8 H(+)(in) = 4 Fe(III)-[cytochrome c] + 2 H2O + 4 H(+)(out). In terms of biological role, component of the cytochrome c oxidase, the last enzyme in the mitochondrial electron transport chain which drives oxidative phosphorylation. The respiratory chain contains 3 multisubunit complexes succinate dehydrogenase (complex II, CII), ubiquinol-cytochrome c oxidoreductase (cytochrome b-c1 complex, complex III, CIII) and cytochrome c oxidase (complex IV, CIV), that cooperate to transfer electrons derived from NADH and succinate to molecular oxygen, creating an electrochemical gradient over the inner membrane that drives transmembrane transport and the ATP synthase. Cytochrome c oxidase is the component of the respiratory chain that catalyzes the reduction of oxygen to water. Electrons originating from reduced cytochrome c in the intermembrane space (IMS) are transferred via the dinuclear copper A center (CU(A)) of subunit 2 and heme A of subunit 1 to the active site in subunit 1, a binuclear center (BNC) formed by heme A3 and copper B (CU(B)). The BNC reduces molecular oxygen to 2 water molecules using 4 electrons from cytochrome c in the IMS and 4 protons from the mitochondrial matrix. The polypeptide is Cytochrome c oxidase subunit 2 (MT-CO2) (Myxine glutinosa (Atlantic hagfish)).